Consider the following 231-residue polypeptide: NDR1/HIN1-like protein 3 (231 aa).

The helical transmembrane segment at 47 to 67 (VIFNILITIAVLLGIAALIIW) threads the bilayer. Residues asparagine 102, asparagine 135, asparagine 145, and asparagine 215 are each glycosylated (N-linked (GlcNAc...) asparagine).

In terms of assembly, may form oligomers or be a component of larger protein complex in plasma membranes. In terms of processing, glycosylated. Expressed in roots, young and senescing leaves, cauline leaves, stems and siliques.

The protein localises to the cell membrane. Confers resistance to Pseudomonas syringae pv. tomato DC3000 (Pst DC3000). This is NDR1/HIN1-like protein 3 from Arabidopsis thaliana (Mouse-ear cress).